The chain runs to 452 residues: UDP-N-acetylmuramoylalanine--D-glutamate ligase (452 aa).

G119–T125 contributes to the ATP binding site.

The protein belongs to the MurCDEF family.

The protein resides in the cytoplasm. The enzyme catalyses UDP-N-acetyl-alpha-D-muramoyl-L-alanine + D-glutamate + ATP = UDP-N-acetyl-alpha-D-muramoyl-L-alanyl-D-glutamate + ADP + phosphate + H(+). Its pathway is cell wall biogenesis; peptidoglycan biosynthesis. Its function is as follows. Cell wall formation. Catalyzes the addition of glutamate to the nucleotide precursor UDP-N-acetylmuramoyl-L-alanine (UMA). The polypeptide is UDP-N-acetylmuramoylalanine--D-glutamate ligase (Streptococcus equi subsp. zooepidemicus (strain MGCS10565)).